A 172-amino-acid chain; its full sequence is 3-hydroxydecanoyl-[acyl-carrier-protein] dehydratase (172 aa).

Residue His71 is part of the active site.

The protein belongs to the thioester dehydratase family. FabA subfamily. Homodimer.

The protein localises to the cytoplasm. The catalysed reaction is a (3R)-hydroxyacyl-[ACP] = a (2E)-enoyl-[ACP] + H2O. It carries out the reaction (3R)-hydroxydecanoyl-[ACP] = (2E)-decenoyl-[ACP] + H2O. It catalyses the reaction (2E)-decenoyl-[ACP] = (3Z)-decenoyl-[ACP]. It functions in the pathway lipid metabolism; fatty acid biosynthesis. Functionally, necessary for the introduction of cis unsaturation into fatty acids. Catalyzes the dehydration of (3R)-3-hydroxydecanoyl-ACP to E-(2)-decenoyl-ACP and then its isomerization to Z-(3)-decenoyl-ACP. Can catalyze the dehydratase reaction for beta-hydroxyacyl-ACPs with saturated chain lengths up to 16:0, being most active on intermediate chain length. The chain is 3-hydroxydecanoyl-[acyl-carrier-protein] dehydratase from Escherichia coli O6:K15:H31 (strain 536 / UPEC).